The sequence spans 368 residues: Alanine racemase (368 aa).

K40 functions as the Proton acceptor; specific for D-alanine in the catalytic mechanism. K40 carries the N6-(pyridoxal phosphate)lysine modification. R136 lines the substrate pocket. The active-site Proton acceptor; specific for L-alanine is the Y263. A substrate-binding site is contributed by M310.

It belongs to the alanine racemase family. Requires pyridoxal 5'-phosphate as cofactor.

It catalyses the reaction L-alanine = D-alanine. It participates in amino-acid biosynthesis; D-alanine biosynthesis; D-alanine from L-alanine: step 1/1. In terms of biological role, catalyzes the interconversion of L-alanine and D-alanine. May also act on other amino acids. The protein is Alanine racemase (alr) of Streptococcus gordonii (strain Challis / ATCC 35105 / BCRC 15272 / CH1 / DL1 / V288).